Here is a 478-residue protein sequence, read N- to C-terminus: MFQPLLDAYVESASIEKMASKSPPPLKIAVANWWGDEEIKEFKNSVLYFILSQRYTITLHQNPNEFSDLVFGNPLGSARKILSYQNAKRVFYTGENESPNFNLFDYAIGFDELDFNDRYLRMPLYYDRLHHKAESVNDTTAPYKLKDNSLYALKKPSHCFKEKHPNLCAVVNDESDPLKRGFASFVASNPNAPIRNAFYDALNSIEPVTGGGSVRNTLGYNVKNKNEFLSQYKFNLCFENTQGYGYVTEKIIDAYFSHTIPIYWGSPSVAKDFNPKSFVNVHDFKNFDEAIDYIKYLHTHKNAYLDMLYENPLNTLDGKAYFYQNLSFKKILAFFKTILENDTIYHDNPFIFCRDLNEPLVTIDDLRVNYDDLRVNYDDLRINYDDLRVNYDDLRINYDDLRVNYDDLRVNYDDLRINYDDLRVNYDDLRVNYERLLSKATPLLELSQNTTSKIYRKAYQKSLPLLRAIRRWVKKLGL.

Residues Gly-94, 186-189 (VASN), Arg-195, 222-225 (VKNK), Asn-240, and 246-250 (YVTEK) each bind substrate. Residues 347–353 (DNPFIFC) are important for acceptor specificity. A run of 10 repeats spans residues 364 to 370 (DDLRVNY), 371 to 377 (DDLRVNY), 378 to 384 (DDLRINY), 385 to 391 (DDLRVNY), 392 to 398 (DDLRINY), 399 to 405 (DDLRVNY), 406 to 412 (DDLRVNY), 413 to 419 (DDLRINY), 420 to 426 (DDLRVNY), and 427 to 433 (DDLRVNY). The interval 364-433 (DDLRVNYDDL…VNYDDLRVNY (70 aa)) is 10 X 7 AA tandem repeat of D-D-L-R-[IV]-N-Y. The segment at 434–478 (ERLLSKATPLLELSQNTTSKIYRKAYQKSLPLLRAIRRWVKKLGL) is may be involved in membrane binding.

The protein belongs to the glycosyltransferase 10 family. Homodimer.

The protein resides in the membrane. Its subcellular location is the cytoplasm. It carries out the reaction a beta-D-galactosyl-(1-&gt;4)-N-acetyl-beta-D-glucosaminyl derivative + GDP-beta-L-fucose = a beta-D-galactosyl-(1-&gt;4)-[alpha-L-fucosyl-(1-&gt;3)]-N-acetyl-beta-D-glucosaminyl derivative + GDP + H(+). The protein operates within lipopolysaccharide biosynthesis; LPS oligosaccharide biosynthesis. Involved in the biosynthesis of the Lewis X (LeX) trisaccharide of the lipopolysaccharide (LPS) O-antigen. Catalyzes the addition of fucose in alpha 1-3 linkage to Gal-beta-1-4-GlcNAc-beta-O-R (LacNAc-R) type II acceptor. This is Alpha-(1,3)-fucosyltransferase FucT from Helicobacter pylori (Campylobacter pylori).